The following is a 431-amino-acid chain: Enolase (431 aa).

Residue Gln163 coordinates (2R)-2-phosphoglycerate. The active-site Proton donor is the Glu205. Residues Asp242, Glu288, and Asp315 each coordinate Mg(2+). Residues Lys340, Arg369, Ser370, and Lys391 each coordinate (2R)-2-phosphoglycerate. Lys340 functions as the Proton acceptor in the catalytic mechanism.

This sequence belongs to the enolase family. Mg(2+) serves as cofactor.

The protein resides in the cytoplasm. The protein localises to the secreted. Its subcellular location is the cell surface. It carries out the reaction (2R)-2-phosphoglycerate = phosphoenolpyruvate + H2O. Its pathway is carbohydrate degradation; glycolysis; pyruvate from D-glyceraldehyde 3-phosphate: step 4/5. Functionally, catalyzes the reversible conversion of 2-phosphoglycerate (2-PG) into phosphoenolpyruvate (PEP). It is essential for the degradation of carbohydrates via glycolysis. The polypeptide is Enolase (Bacillus cereus (strain ZK / E33L)).